Consider the following 579-residue polypeptide: Nif-specific regulatory protein (579 aa).

Residues D40–L187 form the GAF domain. The region spanning I226–A454 is the Sigma-54 factor interaction domain. ATP is bound by residues G254 to E261 and A317 to E326. The segment at E464–S536 is inter-domain linker. Positions 468 and 473 each coordinate a divalent metal cation. A disordered region spans residues R502 to R529. Tandem repeats lie at residues A505 to P506, P507 to P508, E509 to P510, A511 to P512, A513 to P514, E515 to P516, and A517 to P518. A 7 X 2 AA tandem repeats of X-P region spans residues A505–P518. The segment covering A505 to A520 has biased composition (pro residues). Positions R537 to I579 are C-terminal DNA-binding domain. The H-T-H motif DNA-binding region spans Q551–Q570.

Interacts with sigma-54.

Functionally, required for activation of most nif operons, which are directly involved in nitrogen fixation. The chain is Nif-specific regulatory protein (nifA1) from Rhodobacter capsulatus (Rhodopseudomonas capsulata).